Reading from the N-terminus, the 100-residue chain is Osteocalcin (100 aa).

The N-terminal stretch at 1 to 23 is a signal peptide; that stretch reads MRALTLLALLALAALCIAGQAGA. Positions 24–51 are excised as a propeptide; the sequence is KPSGAESSKGAAFVSKQEGSEVVKRPRR. The Gla domain occupies 52-98; sequence YLYQWLGAPVPYPDPLEPRREVCELNPDCDELADHIGFQEAYRRFYG. Ca(2+) contacts are provided by Glu-68, Glu-72, Glu-75, and Asp-81. Glu-68 carries the 4-carboxyglutamate; partial modification. Glu-72 and Glu-75 each carry 4-carboxyglutamate. Cys-74 and Cys-80 are oxidised to a cystine.

This sequence belongs to the osteocalcin/matrix Gla protein family. In terms of processing, gamma-carboxyglutamate residues are formed by vitamin K dependent carboxylation by GGCX. These residues are essential for the binding of calcium. Decarboxylation promotes the hormone activity.

The protein resides in the secreted. Functionally, bone protein that constitutes 1-2% of the total bone protein, and which acts as a negative regulator of bone formation. Functions to limit bone formation without impairing bone resorption or mineralization. It binds strongly to apatite and calcium. The uncarboxylated form acts as a hormone secreted by osteoblasts, which regulates different cellular processes, such as energy metabolism, male fertility and brain development. Regulates of energy metabolism by acting as a hormone favoring pancreatic beta-cell proliferation, insulin secretion and sensitivity and energy expenditure. Uncarboxylated osteocalcin hormone also promotes testosterone production in the testes: acts as a ligand for G protein-coupled receptor GPRC6A at the surface of Leydig cells, initiating a signaling response that promotes the expression of enzymes required for testosterone synthesis in a CREB-dependent manner. Also acts as a regulator of brain development: osteocalcin hormone crosses the blood-brain barrier and acts as a ligand for GPR158 on neurons, initiating a signaling response that prevents neuronal apoptosis in the hippocampus, favors the synthesis of all monoamine neurotransmitters and inhibits that of gamma-aminobutyric acid (GABA). Osteocalcin also crosses the placenta during pregnancy and maternal osteocalcin is required for fetal brain development. The polypeptide is Osteocalcin (BGLAP) (Homo sapiens (Human)).